Consider the following 470-residue polypeptide: ATP synthase subunit beta (470 aa).

Residue 148 to 155 (GGAGVGKT) participates in ATP binding.

It belongs to the ATPase alpha/beta chains family. In terms of assembly, F-type ATPases have 2 components, CF(1) - the catalytic core - and CF(0) - the membrane proton channel. CF(1) has five subunits: alpha(3), beta(3), gamma(1), delta(1), epsilon(1). CF(0) has three main subunits: a(1), b(2) and c(9-12). The alpha and beta chains form an alternating ring which encloses part of the gamma chain. CF(1) is attached to CF(0) by a central stalk formed by the gamma and epsilon chains, while a peripheral stalk is formed by the delta and b chains.

It is found in the cell inner membrane. The enzyme catalyses ATP + H2O + 4 H(+)(in) = ADP + phosphate + 5 H(+)(out). Produces ATP from ADP in the presence of a proton gradient across the membrane. The catalytic sites are hosted primarily by the beta subunits. The protein is ATP synthase subunit beta of Teredinibacter turnerae (strain ATCC 39867 / T7901).